The sequence spans 70 residues: Small ribosomal subunit protein bS21 (70 aa).

The protein belongs to the bacterial ribosomal protein bS21 family.

This Albidiferax ferrireducens (strain ATCC BAA-621 / DSM 15236 / T118) (Rhodoferax ferrireducens) protein is Small ribosomal subunit protein bS21.